We begin with the raw amino-acid sequence, 89 residues long: uncharacterized protein (89 aa).

It to Rhizobium NGR234A y4oN.

This is an uncharacterized protein from Sinorhizobium fredii (strain NBRC 101917 / NGR234).